The following is a 746-amino-acid chain: Stromal interaction molecule 2 (746 aa).

A signal peptide spans 1–14; it reads MLLFGLLVAGVADG. Over 15-218 the chain is Extracellular; that stretch reads CDLVPRHLRG…RPPHNWMKDF (204 aa). Ser-28 carries the phosphoserine modification. Positions 67 to 102 constitute an EF-hand domain; sequence FSLEALQTIHKQMDDDKDGGIEVDESDEFIREDMKY. Residues Asp-80, Asp-82, Asp-84, and Glu-91 each coordinate Ca(2+). Residue Asn-135 is glycosylated (N-linked (GlcNAc...) asparagine). Residues 136–204 form the SAM domain; it reads WTLEDTLQWL…QLKALDVVLF (69 aa). Residues 219–235 form a helical membrane-spanning segment; it reads ILTISIVIGVGGCWFAY. At 236–746 the chain is on the cytoplasmic side; the sequence is TQNKTSKEHV…IKSLFKKKSK (511 aa). The stretch at 247–394 forms a coiled coil; sequence KMMKDLESLQ…EKIKKKRSTV (148 aa). Disordered stretches follow at residues 490 to 562 and 592 to 651; these read PIVP…PDIL and DTAS…RGSP. Residue Ser-523 is modified to Phosphoserine. Positions 527–539 are enriched in low complexity; it reads QRAQLPAHAPLAA. Residues 540-549 are compositionally biased toward basic residues; that stretch reads HPRHPHHPQH. 2 positions are modified to phosphoserine: Ser-609 and Ser-621. Over residues 625–637 the composition is skewed to basic and acidic residues; sequence ISRDELSLEDSSR. Phosphoserine occurs at positions 640, 650, 661, 665, 680, and 697. Residues 684–746 are disordered; sequence LSSGIPVPHP…IKSLFKKKSK (63 aa). The segment covering 723–732 has biased composition (basic and acidic residues); that stretch reads DLCHNGEKSK. Basic residues predominate over residues 733–746; it reads KPSKIKSLFKKKSK.

Oligomer with STIM1. Interacts with ORAI1. Post-translationally, glycosylated. In terms of processing, phosphorylated predominantly on Ser residues.

The protein localises to the endoplasmic reticulum membrane. Plays a role in mediating store-operated Ca(2+) entry (SOCE), a Ca(2+) influx following depletion of intracellular Ca(2+) stores. Functions as a highly sensitive Ca(2+) sensor in the endoplasmic reticulum which activates both store-operated and store-independent Ca(2+)-influx. Regulates basal cytosolic and endoplasmic reticulum Ca(2+) concentrations. Upon mild variations of the endoplasmic reticulum Ca(2+) concentration, translocates from the endoplasmic reticulum to the plasma membrane where it probably activates the Ca(2+) release-activated Ca(2+) (CRAC) channels ORAI1, ORAI2 and ORAI3. May inhibit STIM1-mediated Ca(2+) influx. The chain is Stromal interaction molecule 2 (Stim2) from Mus musculus (Mouse).